A 116-amino-acid chain; its full sequence is Cell cycle protein GpsB (116 aa).

Positions 32-69 (LDDVIKDYETYSALVKELREENSRLKQELSKRMQEAPN) form a coiled coil. Positions 57 to 78 (KQELSKRMQEAPNSTASQVHQS) are disordered. Residues 67–78 (APNSTASQVHQS) show a composition bias toward polar residues.

Belongs to the GpsB family. As to quaternary structure, forms polymers through the coiled coil domains. Interacts with PBP1, MreC and EzrA.

The protein localises to the cytoplasm. In terms of biological role, divisome component that associates with the complex late in its assembly, after the Z-ring is formed, and is dependent on DivIC and PBP2B for its recruitment to the divisome. Together with EzrA, is a key component of the system that regulates PBP1 localization during cell cycle progression. Its main role could be the removal of PBP1 from the cell pole after pole maturation is completed. Also contributes to the recruitment of PBP1 to the division complex. Not essential for septum formation. The sequence is that of Cell cycle protein GpsB from Streptococcus gordonii (strain Challis / ATCC 35105 / BCRC 15272 / CH1 / DL1 / V288).